Consider the following 251-residue polypeptide: Imidazole glycerol phosphate synthase subunit HisF (251 aa).

Catalysis depends on residues D10 and D129.

The protein belongs to the HisA/HisF family. In terms of assembly, heterodimer of HisH and HisF.

It is found in the cytoplasm. It carries out the reaction 5-[(5-phospho-1-deoxy-D-ribulos-1-ylimino)methylamino]-1-(5-phospho-beta-D-ribosyl)imidazole-4-carboxamide + L-glutamine = D-erythro-1-(imidazol-4-yl)glycerol 3-phosphate + 5-amino-1-(5-phospho-beta-D-ribosyl)imidazole-4-carboxamide + L-glutamate + H(+). Its pathway is amino-acid biosynthesis; L-histidine biosynthesis; L-histidine from 5-phospho-alpha-D-ribose 1-diphosphate: step 5/9. Functionally, IGPS catalyzes the conversion of PRFAR and glutamine to IGP, AICAR and glutamate. The HisF subunit catalyzes the cyclization activity that produces IGP and AICAR from PRFAR using the ammonia provided by the HisH subunit. This is Imidazole glycerol phosphate synthase subunit HisF from Cutibacterium acnes (strain DSM 16379 / KPA171202) (Propionibacterium acnes).